The following is a 181-amino-acid chain: Ribosome maturation factor RimM (181 aa).

The PRC barrel domain occupies 98 to 177; sequence EGEFFYCDLV…KITTHNAKTL (80 aa).

Belongs to the RimM family. In terms of assembly, binds ribosomal protein uS19.

The protein resides in the cytoplasm. Functionally, an accessory protein needed during the final step in the assembly of 30S ribosomal subunit, possibly for assembly of the head region. Essential for efficient processing of 16S rRNA. May be needed both before and after RbfA during the maturation of 16S rRNA. It has affinity for free ribosomal 30S subunits but not for 70S ribosomes. In Helicobacter pylori (strain HPAG1), this protein is Ribosome maturation factor RimM.